The sequence spans 304 residues: Acetyl-coenzyme A carboxylase carboxyl transferase subunit beta (304 aa).

Residues 23–292 form the CoA carboxyltransferase N-terminal domain; the sequence is VWTKCDSCGQ…PNPEAPREGV (270 aa). 4 residues coordinate Zn(2+): cysteine 27, cysteine 30, cysteine 46, and cysteine 49. The segment at 27–49 adopts a C4-type zinc-finger fold; it reads CDSCGQVLYRAELERNLEVCPKC. The segment at 284 to 304 is disordered; sequence NPEAPREGVVVPPVPDQEPEA. Over residues 295–304 the composition is skewed to pro residues; the sequence is PPVPDQEPEA.

The protein belongs to the AccD/PCCB family. As to quaternary structure, acetyl-CoA carboxylase is a heterohexamer composed of biotin carboxyl carrier protein (AccB), biotin carboxylase (AccC) and two subunits each of ACCase subunit alpha (AccA) and ACCase subunit beta (AccD). Zn(2+) serves as cofactor.

It is found in the cytoplasm. It catalyses the reaction N(6)-carboxybiotinyl-L-lysyl-[protein] + acetyl-CoA = N(6)-biotinyl-L-lysyl-[protein] + malonyl-CoA. It participates in lipid metabolism; malonyl-CoA biosynthesis; malonyl-CoA from acetyl-CoA: step 1/1. In terms of biological role, component of the acetyl coenzyme A carboxylase (ACC) complex. Biotin carboxylase (BC) catalyzes the carboxylation of biotin on its carrier protein (BCCP) and then the CO(2) group is transferred by the transcarboxylase to acetyl-CoA to form malonyl-CoA. The polypeptide is Acetyl-coenzyme A carboxylase carboxyl transferase subunit beta (Shigella boydii serotype 4 (strain Sb227)).